We begin with the raw amino-acid sequence, 404 residues long: Propionate kinase (404 aa).

It belongs to the acetokinase family. PduW subfamily.

It localises to the cytoplasm. It catalyses the reaction propanoate + ATP = propanoyl phosphate + ADP. The protein operates within polyol metabolism; 1,2-propanediol degradation. Functionally, works with phosphate acetyltransferase (pta) to capture exogenous propionate and regenerate propionyl-CoA during degradation of 1,2-propanediol (1,2-PD). This chain is Propionate kinase, found in Klebsiella pneumoniae (strain 342).